The chain runs to 464 residues: MEFISSRDMQILDTNCEYFGLSRMLLMENAGKGVAEEVMKRFYEGKVQIFAGSGNNGGDGFVAARHLKGFDVEIFLLSKPKTELAIKNLEICRKAGFPVKEGLPEEIDADIVIDAMLGTGVRGRLREPYSTAVKMINESDAFKVAVDVPTGLDPDSGSYEEAVKADLTVTFHKAKPGLAKAREVCGEVAVKDIGIPESFENLCGPGDVAFSYKRYEDAHKGVHGKVLVVGGGDYTGAPALASLAALYAGADIVTTAVPMAIRKVVASFSPNLIVRGVGEERIEMKNLEELEELVKRHDVVVAGMGVGENPEFKEVVEELLKSCKKAVLDAQGIVDSVPENCECILTPHRGEFGRVFGDTEVQKAALKAKAVILLKGREDVITDGSRVKVNRSGNAGMTVGGTGDVLAGIAAAFLCNDDAFHSACAAAFLNGLAGDVCFEKFGYNYTATDLVKAIPEAILRCKSF.

The tract at residues Met-1–Pro-205 is NAD(P)H-hydrate epimerase. Residues Met-9–Asn-201 form the YjeF N-terminal domain. Residues Asn-55–Asp-59 form an NADPHX 1; for epimerase activity region. K(+)-binding residues include Asn-56 and Asp-114. Residues Gly-118–Arg-124 form an NADPHX 1; for epimerase activity region. Tyr-129 and Asp-147 together coordinate (6S)-NADPHX. Thr-150 is a binding site for K(+). One can recognise a YjeF C-terminal domain in the interval Cys-203 to Cys-461. Positions Pro-205–Phe-464 are ADP-dependent (S)-NAD(P)H-hydrate dehydratase. Gly-305 serves as a coordination point for (6S)-NADPHX. Residues His-348–Arg-354 are NADPHX 2; for dehydratase activity. Residues Lys-375–Asp-379 and Asn-394–Gly-403 contribute to the ADP site. Asp-404 serves as a coordination point for (6S)-NADPHX.

This sequence in the N-terminal section; belongs to the NnrE/AIBP family. It in the C-terminal section; belongs to the NnrD/CARKD family. The cofactor is K(+).

It carries out the reaction (6S)-NADHX + ADP = AMP + phosphate + NADH + H(+). It catalyses the reaction (6S)-NADPHX + ADP = AMP + phosphate + NADPH + H(+). The catalysed reaction is (6R)-NADHX = (6S)-NADHX. The enzyme catalyses (6R)-NADPHX = (6S)-NADPHX. Functionally, bifunctional enzyme that catalyzes the epimerization of the S- and R-forms of NAD(P)HX and the dehydration of the S-form of NAD(P)HX at the expense of ADP, which is converted to AMP. This allows the repair of both epimers of NAD(P)HX, a damaged form of NAD(P)H that is a result of enzymatic or heat-dependent hydration. The protein is Bifunctional NAD(P)H-hydrate repair enzyme Nnr (nnr) of Archaeoglobus fulgidus (strain ATCC 49558 / DSM 4304 / JCM 9628 / NBRC 100126 / VC-16).